We begin with the raw amino-acid sequence, 215 residues long: Virion infectivity factor (215 aa).

A Phosphothreonine; by host MAP4K1 modification is found at threonine 98. The HCCH motif motif lies at 110 to 141; it reads HSTYFSCFTAGEVRRAIRGEKLLSCCNYPQAH. The residue at position 147 (serine 147) is a Phosphoserine; by host. The BC-box-like motif signature appears at 147–156; it reads SLQFLALVVV. A multimerization region spans residues 154–167; the sequence is VVVQQNGRPQRDNT.

Belongs to the primate lentivirus group Vif protein family. As to quaternary structure, homomultimer; in vitro and presumably in vivo. Interacts with viral Pr55Gag precursor and human APOBEC3G. The interaction between Vif and APOBEC3G is species-specific, which may play a role in restricting the replication of HIV to humans. Forms an E3 ligase complex by interacting with human CUL5 and elongin BC complex (ELOB and ELOC). Post-translationally, processed in virion by the viral protease. Highly phosphorylated on serine and threonine residues. In terms of processing, polyubiquitinated and degraded by the proteasome in the presence of APOBEC3G.

The protein resides in the host cytoplasm. It localises to the host cell membrane. It is found in the virion. Functionally, counteracts the innate antiviral activity of APOBEC3G. Forms a complex with host APOBEC3G thus preventing the entry of this lethally hypermutating enzyme into progeny virions. Functions as an adapter molecule, recruiting APOBEC3G to the ubiquitin-proteasome machinery. Targets APOBEC3G for degradation through the assembly with elongin BC complex, CUL5 and RBX1. Binds viral RNA and affects the stability of viral nucleoprotein core. May play a role in viral morphology. This is Virion infectivity factor (vif) from Homo sapiens (Human).